A 255-amino-acid polypeptide reads, in one-letter code: Thiazole synthase (255 aa).

Lys-96 serves as the catalytic Schiff-base intermediate with DXP. 1-deoxy-D-xylulose 5-phosphate-binding positions include Gly-157, 183–184, and 205–206; these read AG and NT.

This sequence belongs to the ThiG family. In terms of assembly, homotetramer. Forms heterodimers with either ThiH or ThiS.

It localises to the cytoplasm. The catalysed reaction is [ThiS sulfur-carrier protein]-C-terminal-Gly-aminoethanethioate + 2-iminoacetate + 1-deoxy-D-xylulose 5-phosphate = [ThiS sulfur-carrier protein]-C-terminal Gly-Gly + 2-[(2R,5Z)-2-carboxy-4-methylthiazol-5(2H)-ylidene]ethyl phosphate + 2 H2O + H(+). It participates in cofactor biosynthesis; thiamine diphosphate biosynthesis. Functionally, catalyzes the rearrangement of 1-deoxy-D-xylulose 5-phosphate (DXP) to produce the thiazole phosphate moiety of thiamine. Sulfur is provided by the thiocarboxylate moiety of the carrier protein ThiS. In vitro, sulfur can be provided by H(2)S. This chain is Thiazole synthase, found in Bacillus licheniformis (strain ATCC 14580 / DSM 13 / JCM 2505 / CCUG 7422 / NBRC 12200 / NCIMB 9375 / NCTC 10341 / NRRL NRS-1264 / Gibson 46).